The following is a 454-amino-acid chain: Mannosylfructose-phosphate synthase (454 aa).

Belongs to the glycosyltransferase 1 family. Requires Mg(2+) as cofactor. Mn(2+) is required as a cofactor.

The enzyme catalyses beta-D-fructose 6-phosphate + GDP-alpha-D-mannose = beta-D-fructofuranosyl alpha-D-mannopyranoside 6(F)-phosphate + GDP + H(+). The protein operates within carbohydrate metabolism; mannosylfructose biosynthesis; beta-D-fructofuranosyl alpha-D-mannopyranoside from D-fructose 6-phosphate and GDP-alpha-D-mannose: step 1/2. This is Mannosylfructose-phosphate synthase from Agrobacterium fabrum (strain C58 / ATCC 33970) (Agrobacterium tumefaciens (strain C58)).